Consider the following 309-residue polypeptide: Glutaminase (309 aa).

Substrate is bound by residues serine 65, asparagine 117, glutamate 162, asparagine 169, tyrosine 193, tyrosine 245, and valine 263.

The protein belongs to the glutaminase family. As to quaternary structure, homotetramer.

The enzyme catalyses L-glutamine + H2O = L-glutamate + NH4(+). This chain is Glutaminase, found in Shouchella clausii (strain KSM-K16) (Alkalihalobacillus clausii).